Here is a 136-residue protein sequence, read N- to C-terminus: ATP synthase epsilon chain (136 aa).

Belongs to the ATPase epsilon chain family. In terms of assembly, F-type ATPases have 2 components, CF(1) - the catalytic core - and CF(0) - the membrane proton channel. CF(1) has five subunits: alpha(3), beta(3), gamma(1), delta(1), epsilon(1). CF(0) has three main subunits: a, b and c.

Its subcellular location is the cell membrane. Produces ATP from ADP in the presence of a proton gradient across the membrane. This chain is ATP synthase epsilon chain, found in Macrococcus caseolyticus (strain JCSC5402) (Macrococcoides caseolyticum).